An 840-amino-acid chain; its full sequence is Cullin-4 (840 aa).

A compositionally biased stretch (polar residues) spans 1–11 (MTSGAPPTIST). Positions 1–82 (MTSGAPPTIS…TGNSSRTTAT (82 aa)) are disordered. The segment covering 33 to 48 (TEAKQMRGDTENRSDG) has biased composition (basic and acidic residues). The span at 69-82 (FRSQTGNSSRTTAT) shows a compositional bias: polar residues. One can recognise a Cullin neddylation domain in the interval 772-831 (DRQYKIDAAVVRIMKARKQLNHQTLMTELLQQLRFPVSTADIKKRLESLIEREYISRDPE). A Glycyl lysine isopeptide (Lys-Gly) (interchain with G-Cter in NEDD8) cross-link involves residue Lys-786.

The protein belongs to the cullin family. Part of an E3 ubiquitin-protein ligase complex including cul-4 and ddb-1. Neddylated. Deneddylated via its interaction with the COP9 signalosome (CSN) complex.

It participates in protein modification; protein ubiquitination. Its function is as follows. Component of cullin-based E3 ubiquitin-protein ligase complexes which mediate the ubiquitination and subsequent proteasomal degradation of target proteins. The functional specificity of the E3 ubiquitin-protein ligase complex depends on the variable substrate recognition component. In association with ddb-1 directs ubiquitination of cdt-1 during S phase and is required for restraining DNA rereplication. Probably is involved in ubiquitination of cki-1. This is Cullin-4 (cul-4) from Caenorhabditis elegans.